The chain runs to 293 residues: ATP synthase gamma chain (293 aa).

Belongs to the ATPase gamma chain family. As to quaternary structure, F-type ATPases have 2 components, CF(1) - the catalytic core - and CF(0) - the membrane proton channel. CF(1) has five subunits: alpha(3), beta(3), gamma(1), delta(1), epsilon(1). CF(0) has three main subunits: a, b and c.

Its subcellular location is the cell membrane. Its function is as follows. Produces ATP from ADP in the presence of a proton gradient across the membrane. The gamma chain is believed to be important in regulating ATPase activity and the flow of protons through the CF(0) complex. The chain is ATP synthase gamma chain from Streptococcus agalactiae serotype Ia (strain ATCC 27591 / A909 / CDC SS700).